The sequence spans 368 residues: 3-dehydroquinate synthase (368 aa).

NAD(+) is bound by residues 71-76 (DGESFK), 105-109 (GVIGD), 129-130 (TT), lysine 142, lysine 151, and 169-172 (TLRT). Residues glutamate 184, histidine 247, and histidine 264 each contribute to the Zn(2+) site.

This sequence belongs to the sugar phosphate cyclases superfamily. Dehydroquinate synthase family. Co(2+) serves as cofactor. The cofactor is Zn(2+). Requires NAD(+) as cofactor.

It is found in the cytoplasm. The enzyme catalyses 7-phospho-2-dehydro-3-deoxy-D-arabino-heptonate = 3-dehydroquinate + phosphate. It functions in the pathway metabolic intermediate biosynthesis; chorismate biosynthesis; chorismate from D-erythrose 4-phosphate and phosphoenolpyruvate: step 2/7. Its function is as follows. Catalyzes the conversion of 3-deoxy-D-arabino-heptulosonate 7-phosphate (DAHP) to dehydroquinate (DHQ). The sequence is that of 3-dehydroquinate synthase from Ralstonia pickettii (strain 12J).